Reading from the N-terminus, the 391-residue chain is Ferrochelatase (391 aa).

Fe cation-binding residues include His-196 and Glu-281.

The protein belongs to the ferrochelatase family.

The protein resides in the cytoplasm. The enzyme catalyses heme b + 2 H(+) = protoporphyrin IX + Fe(2+). It functions in the pathway porphyrin-containing compound metabolism; protoheme biosynthesis; protoheme from protoporphyrin-IX: step 1/1. Catalyzes the ferrous insertion into protoporphyrin IX. This Prochlorococcus marinus (strain AS9601) protein is Ferrochelatase.